Reading from the N-terminus, the 121-residue chain is MARIAGVNIPNHKHTEIGLTAIYGIGRSRARKICEATGVPFDKKVKDLTDADLEKLRDEVGKVTVEGDLRRETTMNIKRLMDLGCYRGMRHRKGLPMRGQRTRTNARTRKGPRKAGVALKK.

The segment at 91–121 is disordered; it reads HRKGLPMRGQRTRTNARTRKGPRKAGVALKK.

This sequence belongs to the universal ribosomal protein uS13 family. In terms of assembly, part of the 30S ribosomal subunit. Forms a loose heterodimer with protein S19. Forms two bridges to the 50S subunit in the 70S ribosome.

Its function is as follows. Located at the top of the head of the 30S subunit, it contacts several helices of the 16S rRNA. In the 70S ribosome it contacts the 23S rRNA (bridge B1a) and protein L5 of the 50S subunit (bridge B1b), connecting the 2 subunits; these bridges are implicated in subunit movement. Contacts the tRNAs in the A and P-sites. The polypeptide is Small ribosomal subunit protein uS13 (Cupriavidus taiwanensis (strain DSM 17343 / BCRC 17206 / CCUG 44338 / CIP 107171 / LMG 19424 / R1) (Ralstonia taiwanensis (strain LMG 19424))).